The sequence spans 1179 residues: DNA-directed RNA polymerase subunit beta (1179 aa).

Over residues 1153 to 1162 (MREMEDEDEG) the composition is skewed to acidic residues. The tract at residues 1153-1179 (MREMEDEDEGNGEKLNLVLEGGSLNEE) is disordered.

The protein belongs to the RNA polymerase beta chain family. In terms of assembly, the RNAP catalytic core consists of 2 alpha, 1 beta, 1 beta' and 1 omega subunit. When a sigma factor is associated with the core the holoenzyme is formed, which can initiate transcription.

It catalyses the reaction RNA(n) + a ribonucleoside 5'-triphosphate = RNA(n+1) + diphosphate. Its function is as follows. DNA-dependent RNA polymerase catalyzes the transcription of DNA into RNA using the four ribonucleoside triphosphates as substrates. The chain is DNA-directed RNA polymerase subunit beta from Brevibacillus brevis (strain 47 / JCM 6285 / NBRC 100599).